The sequence spans 705 residues: 1,4-alpha-glucan branching enzyme GlgB (705 aa).

The active-site Nucleophile is Asp-309. The active-site Proton donor is the Glu-360. A disordered region spans residues 654–705; it reads VQVERAADPRPNEQQRLVAETPAHEGGRSAPADAAESAEQKPDDEQKGGKKA. Residues 691-705 are compositionally biased toward basic and acidic residues; that stretch reads AEQKPDDEQKGGKKA.

It belongs to the glycosyl hydrolase 13 family. GlgB subfamily. As to quaternary structure, monomer.

It carries out the reaction Transfers a segment of a (1-&gt;4)-alpha-D-glucan chain to a primary hydroxy group in a similar glucan chain.. The protein operates within glycan biosynthesis; glycogen biosynthesis. Functionally, catalyzes the formation of the alpha-1,6-glucosidic linkages in glycogen by scission of a 1,4-alpha-linked oligosaccharide from growing alpha-1,4-glucan chains and the subsequent attachment of the oligosaccharide to the alpha-1,6 position. This is 1,4-alpha-glucan branching enzyme GlgB from Deinococcus radiodurans (strain ATCC 13939 / DSM 20539 / JCM 16871 / CCUG 27074 / LMG 4051 / NBRC 15346 / NCIMB 9279 / VKM B-1422 / R1).